Consider the following 457-residue polypeptide: Multidrug resistance protein MdtK (457 aa).

Helical transmembrane passes span Leu-11–Val-31, Ile-53–Ala-73, Trp-93–Ile-113, Ala-127–Ala-147, Gly-160–Tyr-180, Leu-188–Met-208, Leu-243–Val-263, Ile-276–Thr-296, Ala-314–Val-334, Leu-357–Ile-377, Ile-387–Ala-407, and Pro-418–Leu-438.

This sequence belongs to the multi antimicrobial extrusion (MATE) (TC 2.A.66.1) family. MdtK subfamily.

It localises to the cell inner membrane. Functionally, multidrug efflux pump that functions probably as a Na(+)/drug antiporter. The sequence is that of Multidrug resistance protein MdtK from Citrobacter koseri (strain ATCC BAA-895 / CDC 4225-83 / SGSC4696).